Consider the following 533-residue polypeptide: Phospho-2-dehydro-3-deoxyheptonate aldolase 1, chloroplastic (533 aa).

The transit peptide at 1–57 (MALSTNSTTSSLLPKTPLVQQPLLKNASLPTTTKAIRFIQPISAIHSSDSSKNTPIV) directs the protein to the chloroplast. Positions 47-56 (SSDSSKNTPI) are enriched in polar residues. The segment at 47 to 70 (SSDSSKNTPIVSAKPSSPPAATST) is disordered. Over residues 57–70 (VSAKPSSPPAATST) the composition is skewed to low complexity. Residue Cys145 coordinates Mn(2+). Substrate is bound by residues Arg184, 343-344 (ER), Lys366, and Arg397. 3 residues coordinate Mn(2+): His429, Glu471, and Asp501.

Belongs to the class-II DAHP synthase family. As to quaternary structure, homodimer. Mn(2+) is required as a cofactor. As to expression, mostly expressed in flowers, especially in petal limbs and tubes, and, to a lower extent, in roots, stems, stigmas, anthers, leaves and sepals.

Its subcellular location is the plastid. It is found in the chloroplast. The catalysed reaction is D-erythrose 4-phosphate + phosphoenolpyruvate + H2O = 7-phospho-2-dehydro-3-deoxy-D-arabino-heptonate + phosphate. Its pathway is metabolic intermediate biosynthesis; chorismate biosynthesis; chorismate from D-erythrose 4-phosphate and phosphoenolpyruvate: step 1/7. Involved in the production of volatile organic compounds (VOCs), including floral volatile benzenoids and phenylpropanoids (FVBP), in flowers of fragrant cultivars (e.g. cv. Mitchell and cv. V26), scent attracting pollinators (e.g. the night-active hawkmoth pollinator Manduca sexta). Catalyzes an aldol-like condensation reaction between phosphoenolpyruvate (PEP) and D-erythrose 4-phosphate (E4P) to generate 3-deoxy-D-arabino-heptulosonate 7-phosphate (DAH7P) and inorganic phosphate. In Petunia hybrida (Petunia), this protein is Phospho-2-dehydro-3-deoxyheptonate aldolase 1, chloroplastic.